A 108-amino-acid chain; its full sequence is ATP synthase peripheral stalk subunit F6, mitochondrial (108 aa).

Residues 1-32 (MVLQRIFRLSSVLRSAVSVHLKRNIGVTAVAF) constitute a mitochondrion transit peptide. Residues lysine 41, lysine 46, and lysine 79 each carry the N6-acetyllysine modification. 3 positions are modified to N6-acetyllysine; alternate: lysine 84, lysine 94, and lysine 99. An N6-succinyllysine; alternate mark is found at lysine 84, lysine 94, and lysine 99. Lysine 105 bears the N6-acetyllysine mark. Phosphoserine is present on serine 108.

Belongs to the eukaryotic ATPase subunit F6 family. As to quaternary structure, component of the ATP synthase complex composed at least of ATP5F1A/subunit alpha, ATP5F1B/subunit beta, ATP5MC1/subunit c (homooctomer), MT-ATP6/subunit a, MT-ATP8/subunit 8, ATP5ME/subunit e, ATP5MF/subunit f, ATP5MG/subunit g, ATP5MK/subunit k, ATP5MJ/subunit j, ATP5F1C/subunit gamma, ATP5F1D/subunit delta, ATP5F1E/subunit epsilon, ATP5PF/subunit F6, ATP5PB/subunit b, ATP5PD/subunit d, ATP5PO/subunit OSCP. ATP synthase complex consists of a soluble F(1) head domain (subunits alpha(3) and beta(3)) - the catalytic core - and a membrane F(0) domain - the membrane proton channel (subunits c, a, 8, e, f, g, k and j). These two domains are linked by a central stalk (subunits gamma, delta, and epsilon) rotating inside the F1 region and a stationary peripheral stalk (subunits F6, b, d, and OSCP).

It is found in the mitochondrion. The protein resides in the mitochondrion inner membrane. Its function is as follows. Subunit F6, of the mitochondrial membrane ATP synthase complex (F(1)F(0) ATP synthase or Complex V) that produces ATP from ADP in the presence of a proton gradient across the membrane which is generated by electron transport complexes of the respiratory chain. ATP synthase complex consist of a soluble F(1) head domain - the catalytic core - and a membrane F(1) domain - the membrane proton channel. These two domains are linked by a central stalk rotating inside the F(1) region and a stationary peripheral stalk. During catalysis, ATP synthesis in the catalytic domain of F(1) is coupled via a rotary mechanism of the central stalk subunits to proton translocation. In vivo, can only synthesize ATP although its ATP hydrolase activity can be activated artificially in vitro. Part of the complex F(0) domain. Part of the complex F(0) domain and the peripheric stalk, which acts as a stator to hold the catalytic alpha(3)beta(3) subcomplex and subunit a/ATP6 static relative to the rotary elements. This Mus musculus (Mouse) protein is ATP synthase peripheral stalk subunit F6, mitochondrial.